Reading from the N-terminus, the 337-residue chain is Aspartate carbamoyltransferase catalytic subunit (337 aa).

Residues arginine 59 and threonine 60 each coordinate carbamoyl phosphate. Position 87 (lysine 87) interacts with L-aspartate. The carbamoyl phosphate site is built by arginine 109, histidine 142, and glutamine 145. 2 residues coordinate L-aspartate: arginine 182 and arginine 253. 2 residues coordinate carbamoyl phosphate: glycine 294 and proline 295.

The protein belongs to the aspartate/ornithine carbamoyltransferase superfamily. ATCase family. In terms of assembly, heterododecamer (2C3:3R2) of six catalytic PyrB chains organized as two trimers (C3), and six regulatory PyrI chains organized as three dimers (R2).

The enzyme catalyses carbamoyl phosphate + L-aspartate = N-carbamoyl-L-aspartate + phosphate + H(+). It participates in pyrimidine metabolism; UMP biosynthesis via de novo pathway; (S)-dihydroorotate from bicarbonate: step 2/3. Functionally, catalyzes the condensation of carbamoyl phosphate and aspartate to form carbamoyl aspartate and inorganic phosphate, the committed step in the de novo pyrimidine nucleotide biosynthesis pathway. The protein is Aspartate carbamoyltransferase catalytic subunit of Prochlorococcus marinus (strain MIT 9211).